We begin with the raw amino-acid sequence, 447 residues long: uncharacterized protein (447 aa).

Disordered regions lie at residues 1 to 80 (MTFE…EQSS), 115 to 184 (ATTQ…PNNP), and 295 to 322 (LQDN…SSGI). Over residues 11-32 (QRRDESAYRLGEEDGRQKGESS) the composition is skewed to basic and acidic residues. Residues 42–51 (KNPSNVSFWS) show a composition bias toward polar residues. Positions 61 to 72 (VKTDRPQFHRAD) are enriched in basic and acidic residues. Residues 115-158 (ATTQSSPISTSFNPQLPSNSNTNRFDFGSESQLSSNYTNDTGLS) show a composition bias toward polar residues. Positions 300 to 321 (SLTSQGSNLSSQNSGLSSSSSG) are enriched in low complexity. The next 2 helical transmembrane spans lie at 385-405 (FMFL…ASFL) and 424-444 (IINR…IGLG).

The protein localises to the membrane. This is an uncharacterized protein from Schizosaccharomyces pombe (strain 972 / ATCC 24843) (Fission yeast).